The following is a 182-amino-acid chain: Chromophore lyase CpcS/CpeS (182 aa).

This sequence belongs to the CpcS/CpeS biliprotein lyase family.

Its function is as follows. Covalently attaches a chromophore to Cys residue(s) of phycobiliproteins. This chain is Chromophore lyase CpcS/CpeS, found in Thermosynechococcus vestitus (strain NIES-2133 / IAM M-273 / BP-1).